The primary structure comprises 72 residues: MSNSMINPSIVNLLEKVDDRYSLVTITSKRSRQLIDGAKPLVDIDSTKPVTVAINEIHEGKITYKTVKEGIK.

It belongs to the RNA polymerase subunit omega family. As to quaternary structure, the RNAP catalytic core consists of 2 alpha, 1 beta, 1 beta' and 1 omega subunit. When a sigma factor is associated with the core the holoenzyme is formed, which can initiate transcription.

The catalysed reaction is RNA(n) + a ribonucleoside 5'-triphosphate = RNA(n+1) + diphosphate. Functionally, promotes RNA polymerase assembly. Latches the N- and C-terminal regions of the beta' subunit thereby facilitating its interaction with the beta and alpha subunits. The polypeptide is DNA-directed RNA polymerase subunit omega (Clostridium botulinum (strain Langeland / NCTC 10281 / Type F)).